The following is a 663-amino-acid chain: A-type ATP synthase subunit I (663 aa).

7 consecutive transmembrane segments (helical) span residues 376 to 396 (FFFG…IVAA), 412 to 432 (FAYI…LFGS), 468 to 488 (LAAL…GFVI), 497 to 517 (GAVF…LLAS), 534 to 554 (IALF…LMII), 568 to 588 (ARLM…NVLV), and 589 to 609 (GMVW…IIFF).

This sequence belongs to the V-ATPase 116 kDa subunit family. As to quaternary structure, has multiple subunits with at least A(3), B(3), C, D, E, F, H, I and proteolipid K(x).

Its subcellular location is the cell membrane. In terms of biological role, component of the A-type ATP synthase that produces ATP from ADP in the presence of a proton gradient across the membrane. The chain is A-type ATP synthase subunit I from Thermococcus kodakarensis (strain ATCC BAA-918 / JCM 12380 / KOD1) (Pyrococcus kodakaraensis (strain KOD1)).